A 240-amino-acid polypeptide reads, in one-letter code: Endonuclease V (240 aa).

Residues Asp-46 and Asp-116 each coordinate Mg(2+).

Belongs to the endonuclease V family. Mg(2+) serves as cofactor.

Its subcellular location is the cytoplasm. The enzyme catalyses Endonucleolytic cleavage at apurinic or apyrimidinic sites to products with a 5'-phosphate.. Its function is as follows. DNA repair enzyme involved in the repair of deaminated bases. Selectively cleaves double-stranded DNA at the second phosphodiester bond 3' to a deoxyinosine leaving behind the intact lesion on the nicked DNA. The sequence is that of Endonuclease V from Rhodospirillum centenum (strain ATCC 51521 / SW).